The following is a 524-amino-acid chain: Alkaline phosphatase, tissue-nonspecific isozyme (524 aa).

An N-terminal signal peptide occupies residues 1 to 17 (MISPFLVLAIGTCLTNS). Position 60 (Asp60) interacts with Mg(2+). Residues Asp60 and Ser110 each coordinate Zn(2+). Ser110 serves as the catalytic Phosphoserine intermediate. Ser110 is modified (phosphoserine). A disulfide bridge connects residues Cys139 and Cys201. Asn140 carries N-linked (GlcNAc...) asparagine glycosylation. A Mg(2+)-binding site is contributed by Thr173. An N-linked (GlcNAc...) asparagine glycan is attached at Asn230. Glu235 contacts Ca(2+). A glycan (N-linked (GlcNAc...) asparagine) is linked at Asn271. Residues Phe290 and Glu291 each coordinate Ca(2+). N-linked (GlcNAc...) asparagine glycosylation occurs at Asn303. Asp306 contributes to the Ca(2+) binding site. Glu332 is a binding site for Mg(2+). Residues Asp337, His341, Asp378, and His379 each contribute to the Zn(2+) site. N-linked (GlcNAc...) asparagine glycosylation occurs at Asn430. His454 provides a ligand contact to Zn(2+). A disulfide bridge links Cys489 with Cys497. Gly501 is lipidated: GPI-anchor amidated glycine. A propeptide spans 502 to 524 (SGSAPSPGALLLPLAVLSLRTLF) (removed in mature form).

This sequence belongs to the alkaline phosphatase family. As to quaternary structure, homodimer. Requires Mg(2+) as cofactor. The cofactor is Zn(2+). Ca(2+) is required as a cofactor. In terms of processing, N-glycosylated. In terms of tissue distribution, widely expressed. Expressed in DRG neurons and spinal cord neurons.

The protein resides in the cell membrane. It is found in the extracellular vesicle membrane. The protein localises to the mitochondrion membrane. It localises to the mitochondrion intermembrane space. The enzyme catalyses a phosphate monoester + H2O = an alcohol + phosphate. The catalysed reaction is diphosphate + H2O = 2 phosphate + H(+). It catalyses the reaction pyridoxal 5'-phosphate + H2O = pyridoxal + phosphate. It carries out the reaction phosphoethanolamine + H2O = ethanolamine + phosphate. The enzyme catalyses N-phosphocreatine + H2O = creatine + phosphate. The catalysed reaction is ATP + H2O = ADP + phosphate + H(+). It catalyses the reaction ADP + H2O = AMP + phosphate + H(+). It carries out the reaction AMP + H2O = adenosine + phosphate. Phosphatase activity is specifically inhibited by 5-((5-chloro-2-methoxyphenyl)sulfonamido)nicotinamide (SBI-425). Its function is as follows. Alkaline phosphatase that metabolizes various phosphate compounds and plays a key role in skeletal mineralization and adaptive thermogenesis. Has broad substrate specificity and can hydrolyze a considerable variety of compounds: however, only a few substrates, such as diphosphate (inorganic pyrophosphate; PPi), pyridoxal 5'-phosphate (PLP) and N-phosphocreatine are natural substrates. Plays an essential role in skeletal and dental mineralization via its ability to hydrolyze extracellular diphosphate, a potent mineralization inhibitor, to phosphate: it thereby promotes hydroxyapatite crystal formation and increases inorganic phosphate concentration. Acts in a non-redundant manner with PHOSPHO1 in skeletal mineralization: while PHOSPHO1 mediates the initiation of hydroxyapatite crystallization in the matrix vesicles (MVs), ALPL/TNAP catalyzes the spread of hydroxyapatite crystallization in the extracellular matrix. Also promotes dephosphorylation of osteopontin (SSP1), an inhibitor of hydroxyapatite crystallization in its phosphorylated state; it is however unclear whether ALPL/TNAP mediates SSP1 dephosphorylation via a direct or indirect manner. Catalyzes dephosphorylation of PLP to pyridoxal (PL), the transportable form of vitamin B6, in order to provide a sufficient amount of PLP in the brain, an essential cofactor for enzymes catalyzing the synthesis of diverse neurotransmitters. Additionally, also able to mediate ATP degradation in a stepwise manner to adenosine, thereby regulating the availability of ligands for purinergic receptors. Also capable of dephosphorylating microbial products, such as lipopolysaccharides (LPS) as well as other phosphorylated small-molecules, such as poly-inosine:cytosine (poly I:C). Acts as a key regulator of adaptive thermogenesis as part of the futile creatine cycle: localizes to the mitochondria of thermogenic fat cells and acts by mediating hydrolysis of N-phosphocreatine to initiate a futile cycle of creatine dephosphorylation and phosphorylation. During the futile creatine cycle, creatine and N-phosphocreatine are in a futile cycle, which dissipates the high energy charge of N-phosphocreatine as heat without performing any mechanical or chemical work. In Mus musculus (Mouse), this protein is Alkaline phosphatase, tissue-nonspecific isozyme.